The primary structure comprises 318 residues: Cytosolic Fe-S cluster assembly factor Nubp1 homolog (318 aa).

Positions 1–15 (MSAPEVENKPADAPE) are enriched in basic and acidic residues. The disordered stretch occupies residues 1-29 (MSAPEVENKPADAPEHCPGTESENAGKAS). 4 residues coordinate [4Fe-4S] cluster: Cys-17, Cys-31, Cys-34, and Cys-40. 70-77 (GKGGVGKS) is an ATP binding site. 2 residues coordinate [4Fe-4S] cluster: Cys-245 and Cys-248.

The protein belongs to the Mrp/NBP35 ATP-binding proteins family. NUBP1/NBP35 subfamily. Heterotetramer of 2 Nubp1 and 2 Nubp2 chains. The cofactor is [4Fe-4S] cluster.

It localises to the cytoplasm. Component of the cytosolic iron-sulfur (Fe/S) protein assembly (CIA) machinery. Required for maturation of extramitochondrial Fe-S proteins. The Nubp1-Nubp2 heterotetramer forms a Fe-S scaffold complex, mediating the de novo assembly of an Fe-S cluster and its transfer to target apoproteins. The sequence is that of Cytosolic Fe-S cluster assembly factor Nubp1 homolog from Aedes aegypti (Yellowfever mosquito).